Here is a 284-residue protein sequence, read N- to C-terminus: Bifunctional protein FolD (284 aa).

NADP(+) contacts are provided by residues 166–168 and Ile-232; that span reads GAS.

This sequence belongs to the tetrahydrofolate dehydrogenase/cyclohydrolase family. Homodimer.

The catalysed reaction is (6R)-5,10-methylene-5,6,7,8-tetrahydrofolate + NADP(+) = (6R)-5,10-methenyltetrahydrofolate + NADPH. The enzyme catalyses (6R)-5,10-methenyltetrahydrofolate + H2O = (6R)-10-formyltetrahydrofolate + H(+). It participates in one-carbon metabolism; tetrahydrofolate interconversion. Catalyzes the oxidation of 5,10-methylenetetrahydrofolate to 5,10-methenyltetrahydrofolate and then the hydrolysis of 5,10-methenyltetrahydrofolate to 10-formyltetrahydrofolate. The chain is Bifunctional protein FolD from Pseudomonas aeruginosa (strain LESB58).